The chain runs to 911 residues: Band 3 anion transport protein (911 aa).

Met1 is subject to N-acetylmethionine. The segment covering 1-26 (MEELQDDYEDMMEENLEQEEYEDPDI) has biased composition (acidic residues). The segment at 1 to 40 (MEELQDDYEDMMEENLEQEEYEDPDIPESQMEEPAAHDTE) is disordered. Over 1-403 (MEELQDDYED…LSDITDAFSP (403 aa)) the chain is Cytoplasmic. Tyr8, Tyr21, and Tyr46 each carry phosphotyrosine. The interval 13–31 (EENLEQEEYEDPDIPESQM) is (Microbial infection) Interaction with P.falciparum (isolate K1) FBPA. The interval 55-290 (HKVYVELQEL…LGRAAATLMS (236 aa)) is globular. The tract at residues 176-185 (AVLTRSGDPS) is interaction with ANK1. Residues Ser185 and Ser350 each carry the phosphoserine modification. The interval 304–357 (RGELLHSLEGFLDCSLVLPPTDAPSEQALLSLVPVQRELLRRRYQSSPAKPDSS) is dimerization arm. Tyr359 carries the phosphotyrosine modification. A helical membrane pass occupies residues 404–427 (QVLAAVIFIYFAALSPAITFGGLL). The Extracellular portion of the chain corresponds to 428 to 435 (GEKTRNQM). The helical transmembrane segment at 436 to 456 (GVSELLISTAVQGILFALLGA) threads the bilayer. The Cytoplasmic segment spans residues 457-459 (QPL). Residues 460–476 (LVVGFSGPLLVFEEAFF) traverse the membrane as a discontinuously helical segment. Residues 477–485 (SFCETNGLE) lie on the Extracellular side of the membrane. Residues 486 to 506 (YIVGRVWIGFWLILLVVLVVA) form a helical membrane-spanning segment. Residues 507 to 518 (FEGSFLVRFISR) lie on the Cytoplasmic side of the membrane. The helical transmembrane segment at 519–541 (YTQEIFSFLISLIFIYETFSKLI) threads the bilayer. The Extracellular segment spans residues 542–570 (KIFQDHPLQKTYNYNVLMVPKPQGPLPNT). Residues 559 to 630 (MVPKPQGPLP…DFFIQDTYTQ (72 aa)) form an involved in anion transport region. Residues 571–591 (ALLSLVLMAGTFFFAMMLRKF) form a helical membrane-spanning segment. At 592 to 602 (KNSSYFPGKLR) the chain is on the cytoplasmic side. A helical transmembrane segment spans residues 603–623 (RVIGDFGVPISILIMVLVDFF). The Extracellular portion of the chain corresponds to 624-663 (IQDTYTQKLSVPDGFKVSNSSARGWVIHPLGLRSEFPIWM). The N-linked (GlcNAc...) (complex) asparagine glycan is linked to Asn642. A helical transmembrane segment spans residues 664–684 (MFASALPALLVFILIFLESQI). Residues 685 to 700 (TTLIVSKPERKMVKGS) lie on the Cytoplasmic side of the membrane. The helical transmembrane segment at 701-719 (GFHLDLLLVVGMGGVAALF) threads the bilayer. The chain crosses the membrane as a discontinuously helical span at residues 720–737 (GMPWLSATTVRSVTHANA). The segment at 720–761 (GMPWLSATTVRSVTHANALTVMGKASTPGAAAQIQEVKEQRI) is (Microbial infection) 5ABC region; interaction with P.falciparum (isolate 3D7) MSP9. The Cytoplasmic segment spans residues 738 to 760 (LTVMGKASTPGAAAQIQEVKEQR). Transmembrane regions (helical) follow at residues 761–781 (ISGL…PILS) and 782–800 (RIPL…VTSL). Residues 801-838 (SGIQLFDRILLLFKPPKYHPDVPYVKRVKTWRMHLFTG) lie on the Cytoplasmic side of the membrane. An intramembrane region (discontinuously helical) is located at residues 839–869 (IQIICLAVLWVVKSTPASLALPFVLILTVPL). Cys843 carries the S-palmitoyl cysteine lipid modification. Residues 870-911 (RRVLLPLIFRNVELQCLDADDAKATFDEEEGRDEYDEVAMPV) are Cytoplasmic-facing. Residue Tyr904 is modified to Phosphotyrosine.

Belongs to the anion exchanger (TC 2.A.31) family. As to quaternary structure, a dimer in solution, but in its membrane environment, it exists primarily as a mixture of dimers and tetramers and spans the membrane asymmetrically. Component of the ankyrin-1 complex in the erythrocyte, composed of ANK1, RHCE, RHAG, SLC4A1, EPB42, GYPA, GYPB and AQP1. Interacts with STOM; this interaction positively regulates SLC4A1 activity. Interacts with GYPA; a GYPA monomer is bound at each end of the SLC4A1 dimer forming a heterotetramer. Three SLC4A1 dimers (Band 3-I, Band 3-II and Band 3-III) participates in the ankyrin-1 complex. Interacts (via the cytoplasmic domain) with EPB42; this interaction is mediated by the SLC4A1 Band 3-I dimer. Interacts (via the cytoplasmic domain) directly with ANK1; this interaction is mediated by the SLC4A1 Band 3-II and Band 3-III dimers. Interacts with TMEM139. In terms of assembly, (Microbial infection) Interacts (via N-terminus) with P.falciparum (isolate K1) aldolase FBPA; the interaction inhibits FBPA catalytic activity. As to quaternary structure, (Microbial infection) Interacts (via the 5ABC region) with P.falciparum (isolate 3D7) MSP9/ABRA (via N-terminus). (Microbial infection) Interacts (via the 5ABC region) with P.falciparum (isolate 3D7) MSP1 p42 subunit. Phosphorylated on Tyr-8 and Tyr-21 most likely by SYK. PP1-resistant phosphorylation that precedes Tyr-359 and Tyr-904 phosphorylation. Post-translationally, phosphorylated on Tyr-359 and Tyr-904 most likely by LYN. PP1-inhibited phosphorylation that follows Tyr-8 and Tyr-21 phosphorylation. In terms of processing, N-glycosylated. As to expression, detected in erythrocytes (at protein level). Expressed in kidney (at protein level).

The protein resides in the cell membrane. It localises to the basolateral cell membrane. It catalyses the reaction hydrogencarbonate(in) + chloride(out) = hydrogencarbonate(out) + chloride(in). With respect to regulation, phenyl isothiocyanate inhibits anion transport in vitro. Its function is as follows. Functions both as a transporter that mediates electroneutral anion exchange across the cell membrane and as a structural protein. Component of the ankyrin-1 complex of the erythrocyte membrane; required for normal flexibility and stability of the erythrocyte membrane and for normal erythrocyte shape via the interactions of its cytoplasmic domain with cytoskeletal proteins, glycolytic enzymes, and hemoglobin. Functions as a transporter that mediates the 1:1 exchange of inorganic anions across the erythrocyte membrane. Mediates chloride-bicarbonate exchange in the kidney, and is required for normal acidification of the urine. (Microbial infection) Acts as a receptor for P.falciparum (isolate 3D7) MSP9 and thus, facilitates merozoite invasion of erythrocytes. Acts as a receptor for P.falciparum (isolate 3D7) MSP1 and thus, facilitates merozoite invasion of erythrocytes. This chain is Band 3 anion transport protein, found in Homo sapiens (Human).